We begin with the raw amino-acid sequence, 727 residues long: Alpha-1,3-galactosidase A (727 aa).

Residues 220 to 241 (ATNRTWRTSNPVFPERHEDHRP) are disordered. Positions 221-230 (TNRTWRTSNP) are enriched in polar residues. PbH1 repeat units follow at residues 336–358 (KGTVRITNSVFDNPQDDPINIHG), 461–483 (TPTVEITGNTFQAVPTRGILVTT), 484–506 (RRPVRIENNRFDGMSMASIYISS), 517–538 (VRNVTIRGNVFDRPASPVIFFD), 551–572 (HRNVLIEDNDFNLTGGTILSGR), and 574–603 (VGGLTFRDNRVERYPHLRLTGPSRALRVGD).

It belongs to the glycosyl hydrolase 110 family. A subfamily.

It carries out the reaction Hydrolysis of terminal, non-reducing branched (1-&gt;3)-alpha-D-galactosidic residues, producing free D-galactose.. It catalyses the reaction Hydrolysis of terminal, non-reducing alpha-D-galactose residues in alpha-D-galactosides, including galactose oligosaccharides, galactomannans and galactolipids.. In terms of biological role, alpha-galactosidase that specifically removes branched alpha-1,3-linked galactose residues present in blood group B antigens. Has no activity toward linear alpha-1,3-linked galactose residues. This is Alpha-1,3-galactosidase A (glaA) from Peterkaempfera griseoplana (Streptacidiphilus griseoplanus).